A 462-amino-acid chain; its full sequence is UDP-N-acetylmuramoylalanine--D-glutamate ligase (462 aa).

Position 112–118 (112–118) interacts with ATP; sequence GTNGKTT.

Belongs to the MurCDEF family.

It localises to the cytoplasm. The catalysed reaction is UDP-N-acetyl-alpha-D-muramoyl-L-alanine + D-glutamate + ATP = UDP-N-acetyl-alpha-D-muramoyl-L-alanyl-D-glutamate + ADP + phosphate + H(+). The protein operates within cell wall biogenesis; peptidoglycan biosynthesis. Its function is as follows. Cell wall formation. Catalyzes the addition of glutamate to the nucleotide precursor UDP-N-acetylmuramoyl-L-alanine (UMA). The polypeptide is UDP-N-acetylmuramoylalanine--D-glutamate ligase (Nostoc sp. (strain PCC 7120 / SAG 25.82 / UTEX 2576)).